Reading from the N-terminus, the 518-residue chain is Putative N-acetylmuramoyl-L-alanine amidase YrvJ (518 aa).

Residues 1–27 form the signal peptide; that stretch reads MNKKYFVLIVCIIFTSALFPTFSSVTA. SH3b domains lie at 29–91, 102–164, 181–243, and 258–320; these read QGEA…ITKE, SDTV…TSGG, STTG…LTSS, and AKKA…VQTS. Disordered regions lie at residues 94 to 121 and 160 to 186; these read ASTS…PGTS and VTSG…TGTV. Composition is skewed to low complexity over residues 95 to 108 and 160 to 169; these read STSS…VTST and VTSGGSSSAS. The interval 322–352 is disordered; sequence SAEEAGEPPVSDSPSGNGSLNNKTIIVDPGH. The span at 333-345 shows a compositional bias: polar residues; sequence DSPSGNGSLNNKT. Positions 346–514 constitute a MurNAc-LAA domain; that stretch reads IIVDPGHGGK…VTDGIESGLE (169 aa).

This sequence belongs to the N-acetylmuramoyl-L-alanine amidase 3 family.

The protein resides in the secreted. The protein localises to the cell wall. The catalysed reaction is Hydrolyzes the link between N-acetylmuramoyl residues and L-amino acid residues in certain cell-wall glycopeptides.. Functionally, probably involved in cell-wall metabolism. The sequence is that of Putative N-acetylmuramoyl-L-alanine amidase YrvJ (yrvJ) from Bacillus subtilis (strain 168).